A 141-amino-acid polypeptide reads, in one-letter code: uncharacterized protein (141 aa).

This is an uncharacterized protein from Thermoproteus tenax (TTV1).